A 53-amino-acid chain; its full sequence is UPF0391 membrane protein Bcen2424_6479 (53 aa).

2 consecutive transmembrane segments (helical) span residues 5–25 (AIIF…GIAA) and 30–50 (IAKI…LLGV).

This sequence belongs to the UPF0391 family.

Its subcellular location is the cell membrane. This Burkholderia cenocepacia (strain HI2424) protein is UPF0391 membrane protein Bcen2424_6479.